The sequence spans 793 residues: Nuclear cap-binding protein subunit 1 (793 aa).

2 disordered regions span residues 1 to 30 (MSRR…SEIE) and 668 to 692 (LARQ…GPLE). The MIF4G domain occupies 30–242 (EERLESLICR…CLWSQIQKLK (213 aa)). Basic and acidic residues predominate over residues 683–692 (SSDREDGPLE). Residues 686–716 (REDGPLEEQIERLQEKVESAQSEQKNLFLVI) are a coiled coil.

This sequence belongs to the NCBP1 family. In terms of assembly, component of the nuclear cap-binding complex (CBC), a heterodimer composed of NCBP1/CBP80 and NCBP2/CBP20 that interacts with m7GpppG-capped RNA. Component of an alternative nuclear cap-binding complex (CBC) composed of NCBP1/CBP80 and NCBP3.

It is found in the nucleus. It localises to the cytoplasm. Component of the cap-binding complex (CBC), which binds cotranscriptionally to the 5'-cap of pre-mRNAs and is involved in various processes such as pre-mRNA splicing, translation regulation, nonsense-mediated mRNA decay, RNA-mediated gene silencing (RNAi) by microRNAs (miRNAs) and mRNA export. The CBC complex is involved in mRNA export from the nucleus, leading to the recruitment of the mRNA export machinery to the 5'-end of mRNA and to mRNA export in a 5' to 3' direction through the nuclear pore. The CBC complex is also involved in mediating U snRNA and intronless mRNAs export from the nucleus. The CBC complex is essential for a pioneer round of mRNA translation, before steady state translation when the CBC complex is replaced by cytoplasmic cap-binding protein eIF4E. The pioneer round of mRNA translation mediated by the CBC complex plays a central role in nonsense-mediated mRNA decay (NMD), NMD only taking place in mRNAs bound to the CBC complex, but not on eIF4E-bound mRNAs. The CBC complex enhances NMD in mRNAs containing at least one exon-junction complex (EJC), promoting the interaction between UPF1 and UPF2. The CBC complex is also involved in 'failsafe' NMD, which is independent of the EJC complex, while it does not participate in Staufen-mediated mRNA decay (SMD). During cell proliferation, the CBC complex is also involved in microRNAs (miRNAs) biogenesis via its interaction with SRRT/ARS2 and is required for miRNA-mediated RNA interference. The CBC complex also acts as a negative regulator of PARN, thereby acting as an inhibitor of mRNA deadenylation. In the CBC complex, NCBP1/CBP80 does not bind directly capped RNAs (m7GpppG-capped RNA) but is required to stabilize the movement of the N-terminal loop of NCBP2/CBP20 and lock the CBC into a high affinity cap-binding state with the cap structure. Associates with NCBP3 to form an alternative cap-binding complex (CBC) which plays a key role in mRNA export. The conventional CBC with NCBP2 binds both small nuclear RNA (snRNA) and messenger (mRNA) and is involved in their export from the nucleus whereas the alternative CBC with NCBP3 does not bind snRNA and associates only with mRNA thereby playing a role only in mRNA export. This chain is Nuclear cap-binding protein subunit 1 (NCBP1), found in Gallus gallus (Chicken).